Reading from the N-terminus, the 544-residue chain is Chaperonin GroEL (544 aa).

Residues 29-32 (TMGP), K50, 86-90 (DGTTT), G414, 477-479 (NAV), and D493 each bind ATP.

It belongs to the chaperonin (HSP60) family. Forms a cylinder of 14 subunits composed of two heptameric rings stacked back-to-back. Interacts with the co-chaperonin GroES.

It localises to the cytoplasm. It carries out the reaction ATP + H2O + a folded polypeptide = ADP + phosphate + an unfolded polypeptide.. Together with its co-chaperonin GroES, plays an essential role in assisting protein folding. The GroEL-GroES system forms a nano-cage that allows encapsulation of the non-native substrate proteins and provides a physical environment optimized to promote and accelerate protein folding. The protein is Chaperonin GroEL of Campylobacter curvus (strain 525.92).